The following is a 179-amino-acid chain: Large ribosomal subunit protein uL5 (179 aa).

The protein belongs to the universal ribosomal protein uL5 family. As to quaternary structure, part of the 50S ribosomal subunit; part of the 5S rRNA/L5/L18/L25 subcomplex. Contacts the 5S rRNA and the P site tRNA. Forms a bridge to the 30S subunit in the 70S ribosome.

In terms of biological role, this is one of the proteins that bind and probably mediate the attachment of the 5S RNA into the large ribosomal subunit, where it forms part of the central protuberance. In the 70S ribosome it contacts protein S13 of the 30S subunit (bridge B1b), connecting the 2 subunits; this bridge is implicated in subunit movement. Contacts the P site tRNA; the 5S rRNA and some of its associated proteins might help stabilize positioning of ribosome-bound tRNAs. The sequence is that of Large ribosomal subunit protein uL5 from Buchnera aphidicola subsp. Schizaphis graminum (strain Sg).